The following is a 377-amino-acid chain: MKPFSPELLVLSFILLVLSCAIRPAKGRWILWVIIVALNTYLTMTTTGDSTLDYDIANNLFVITLTATDYILLTDVQRELQFRNQKGVEQASLLERIKWATWLVQSRRGVGWNWEPKIFVHRFSPKTSRLSFLLQQLVTGARHYLICDLVSLYSRSPVAFAEPLASRPLIWRCADIAAWLLFTTNQVSILLTALSLMQVLSGYSEPQDWVPVFGRWRDAYTVRRFWGRSWHQLVRRCLSSPGKYLSTKVLGLKPGSNPALYVQLYAAFFLSGVLHAIGDFKVHEDWYKAGTMEFFCVQAVIIQMEDGVLWVGRKLGIKETWYWRALGHLWTVAWFVYSCPNWLGATISGRGKASMALESSLVLGLYRGEWHPPRVAQ.

Residues 1-27 (MKPFSPELLVLSFILLVLSCAIRPAKG) form the signal peptide. A run of 4 helical transmembrane segments spans residues 29–49 (WILW…TTGD), 56–76 (IANN…LTDV), 176–196 (IAAW…ALSL), and 258–278 (PALY…HAIG).

It belongs to the wax synthase family.

It localises to the membrane. The protein operates within secondary metabolite biosynthesis; terpenoid biosynthesis. Its function is as follows. Acetyltransferase; part of the gene cluster that mediates the biosynthesis of pleuromutilin, a tricyclic diterpene showing antibacterial properties. The geranylgeranyl diphosphate (GGPP) synthase ple4 catalyzes the first step in pleuromutilin biosynthesis. GGPP is then substrate of the premutilin synthase (PS) ple3 to yield premutilin. Premutilin synthase is a bifunctional enzyme composed of the fusion of a class II diterpene cyclase (DTC) and a class I diterpene synthase (DTS), with the corresponding domains and active sites containing characteristic aspartate-rich motifs. GGPP is first converted to mutildienyl-diphosphate (MPP) at the class II DTC site. MPP is subsequently further cyclized at the class I DTS site, followed by a 1,5-hydride shift and addition of water prior to terminating deprotonation, to yield premutilin. The cytochrome P450 monooxygenases ple5 and ple6 hydroxylate premutilin at C-11 and C-3, respectively, producing 11-hydroxypremutilin and 3-hydroxypremutilin. The combination of the actions of both ple5 and ple6 leads to the production of 3,11-dihydroxypremutilin. The short chain dehydrogenase ple7 further converts 3,11-dihydroxypremutilin into mutilin. The acetyltransferase ple2 then acetylates mutilin to produce 14-O-acetylmutilin. Finally, the cytochrome P450 monooxygenase ple1 catalyzes hydroxylation on the alpha position of the acetyl side chain of 14-O-acetylmutilin to yield pleuromutilin. The chain is Acetyltransferase ple2 from Rhodocybe pseudopiperita (Clitopilus pseudopiperitus).